Reading from the N-terminus, the 276-residue chain is uncharacterized protein (276 aa).

A disordered region spans residues 1–70 (MSKAKSPIKS…SDDDEEDSPN (70 aa)). Residues 21-35 (VLREKKVKDAEKAEH) are compositionally biased toward basic and acidic residues. The region spanning 105 to 183 (GVLYVGRLPH…KLLQCKVIPE (79 aa)) is the RRM domain. Residues 249–276 (VSHPKAASPVASKKSSKKKNKKVLAAHK) are disordered. The span at 252-261 (PKAASPVASK) shows a compositional bias: low complexity. Residues 262-276 (KSSKKKNKKVLAAHK) show a composition bias toward basic residues.

Its subcellular location is the nucleus. The protein localises to the nucleolus. This is an uncharacterized protein from Schizosaccharomyces pombe (strain 972 / ATCC 24843) (Fission yeast).